Here is a 146-residue protein sequence, read N- to C-terminus: Putative pre-16S rRNA nuclease (146 aa).

It belongs to the YqgF nuclease family.

It is found in the cytoplasm. In terms of biological role, could be a nuclease involved in processing of the 5'-end of pre-16S rRNA. This chain is Putative pre-16S rRNA nuclease, found in Burkholderia mallei (strain SAVP1).